The sequence spans 78 residues: D-alanyl carrier protein (78 aa).

Residues 1-78 (MAFRENVLEI…MIITQLEALK (78 aa)) enclose the Carrier domain. S36 is subject to O-(pantetheine 4'-phosphoryl)serine.

It belongs to the DltC family. In terms of processing, 4'-phosphopantetheine is transferred from CoA to a specific serine of apo-DCP.

Its subcellular location is the cytoplasm. It participates in cell wall biogenesis; lipoteichoic acid biosynthesis. In terms of biological role, carrier protein involved in the D-alanylation of lipoteichoic acid (LTA). The loading of thioester-linked D-alanine onto DltC is catalyzed by D-alanine--D-alanyl carrier protein ligase DltA. The DltC-carried D-alanyl group is further transferred to cell membrane phosphatidylglycerol (PG) by forming an ester bond, probably catalyzed by DltD. D-alanylation of LTA plays an important role in modulating the properties of the cell wall in Gram-positive bacteria, influencing the net charge of the cell wall. The chain is D-alanyl carrier protein from Listeria monocytogenes serotype 4a (strain HCC23).